The following is a 466-amino-acid chain: UDP-N-acetylglucosamine--dolichyl-phosphate N-acetylglucosaminephosphotransferase (466 aa).

The chain crosses the membrane as a helical span at residues 12 to 32 (AAFAVAAHAPVLGLILLGSIV). Residue Asp-57 participates in UDP-N-acetyl-alpha-D-glucosamine binding. A glycan (N-linked (GlcNAc...) asparagine) is linked at Asn-59. Position 90 (Glu-90) interacts with UDP-N-acetyl-alpha-D-glucosamine. 2 consecutive transmembrane segments (helical) span residues 91 to 111 (SLGI…TVCL) and 124 to 144 (PYAS…LGFV). Lys-155 is a dolichyl phosphate binding site. A run of 2 helical transmembrane segments spans residues 156 to 176 (IILT…SLSV) and 236 to 256 (GAAL…LCIF). 255–263 (IFCTNSINI) is a binding site for dolichyl phosphate. Asn-262 lines the Mg(2+) pocket. The next 4 helical transmembrane spans lie at 263–283 (ILAG…VASV), 316–336 (DHQL…LALW), 345–365 (VFVG…SSIT), and 374–394 (LFFA…FSIV). Asn-268 is a UDP-N-acetyl-alpha-D-glucosamine binding site. Asp-349 provides a ligand contact to Mg(2+). 398-400 (RHR) contributes to the UDP-N-acetyl-alpha-D-glucosamine binding site. Residue Asn-416 is glycosylated (N-linked (GlcNAc...) asparagine). Residues 442-462 (CQVIACVLGFVVRYVLSAFLY) form a helical membrane-spanning segment.

It belongs to the glycosyltransferase 4 family. It depends on Mg(2+) as a cofactor.

It localises to the endoplasmic reticulum membrane. The catalysed reaction is a di-trans,poly-cis-dolichyl phosphate + UDP-N-acetyl-alpha-D-glucosamine = an N-acetyl-alpha-D-glucosaminyl-diphospho-di-trans,poly-cis-dolichol + UMP. The protein operates within protein modification; protein glycosylation. Inhibited by natural nucleoside antibiotic tunicamycin, which acts as a structural analog and competitor of UDP-GlcNAc. UDP-N-acetylglucosamine--dolichyl-phosphate N-acetylglucosaminephosphotransferase that operates in the biosynthetic pathway of dolichol-linked oligosaccharides, the glycan precursors employed in protein asparagine (N)-glycosylation. The assembly of dolichol-linked oligosaccharides begins on the cytosolic side of the endoplasmic reticulum membrane and finishes in its lumen. The sequential addition of sugars to dolichol pyrophosphate produces dolichol-linked oligosaccharides containing fourteen sugars, including two GlcNAcs, nine mannoses and three glucoses. Once assembled, the oligosaccharide is transferred from the lipid to nascent proteins by oligosaccharyltransferases. Catalyzes the initial step of dolichol-linked oligosaccharide biosynthesis, transfering GlcNAc-1-P from cytosolic UDP-GlcNAc onto the carrier lipid dolichyl phosphate (P-dolichol), yielding GlcNAc-P-P-dolichol embedded in the cytoplasmic leaflet of the endoplasmic reticulum membrane. In Leishmania amazonensis, this protein is UDP-N-acetylglucosamine--dolichyl-phosphate N-acetylglucosaminephosphotransferase (NAGT).